Here is a 659-residue protein sequence, read N- to C-terminus: 4-alpha-glucanotransferase (659 aa).

The active-site Nucleophile is the glutamate 123. Aspartate 214 acts as the Proton donor in catalysis.

The protein belongs to the glycosyl hydrolase 57 family. Homodimer.

The enzyme catalyses Transfers a segment of a (1-&gt;4)-alpha-D-glucan to a new position in an acceptor, which may be glucose or a (1-&gt;4)-alpha-D-glucan.. With respect to regulation, inhibited by p-chloromercuribenzoic acid, monoiodoacetic acid, mercury and nickel ions. Functionally, catalyzes the transglycosylation of maltooligosaccharides, yielding maltooligosaccharides of various lengths and glucose. Maltose and glucose can be used as acceptors in the transfer reaction. This is 4-alpha-glucanotransferase (jgt) from Thermococcus litoralis (strain ATCC 51850 / DSM 5473 / JCM 8560 / NS-C).